Consider the following 186-residue polypeptide: Large ribosomal subunit protein uL16 (186 aa).

Belongs to the universal ribosomal protein uL16 family.

The chain is Large ribosomal subunit protein uL16 from Nanoarchaeum equitans (strain Kin4-M).